Here is a 593-residue protein sequence, read N- to C-terminus: tRNA (guanine(26)-N(2))-dimethyltransferase 1 (593 aa).

Positions 9-465 (TVIKEGEAEV…APMEIIWDIM (457 aa)) constitute a Trm1 methyltransferase domain. Arginine 36 contributes to the S-adenosyl-L-methionine binding site. The tract at residues 56-118 (AMLSKRARSS…KTAYESARRE (63 aa)) is disordered. Composition is skewed to basic and acidic residues over residues 68–81 (VVEK…KEET) and 88–118 (DNGK…ARRE). Positions 134, 152, and 185 each coordinate S-adenosyl-L-methionine. The Zn(2+) site is built by cysteine 315, cysteine 318, cysteine 350, and cysteine 353. A disordered region spans residues 546–593 (VNGHLNNNHKEAGDEEEEEEEEEPEEDIIEGEPELKRQKTTEDFASTS). Positions 558-577 (GDEEEEEEEEEPEEDIIEGE) are enriched in acidic residues. Positions 578–587 (PELKRQKTTE) are enriched in basic and acidic residues.

The protein belongs to the class I-like SAM-binding methyltransferase superfamily. Trm1 family.

It catalyses the reaction guanosine(26) in tRNA + 2 S-adenosyl-L-methionine = N(2)-dimethylguanosine(26) in tRNA + 2 S-adenosyl-L-homocysteine + 2 H(+). Dimethylates a single guanine residue at position 26 of most tRNAs using S-adenosyl-L-methionine as donor of the methyl groups. The polypeptide is tRNA (guanine(26)-N(2))-dimethyltransferase 1 (Arabidopsis thaliana (Mouse-ear cress)).